The following is a 274-amino-acid chain: Undecaprenyl-diphosphatase (274 aa).

Transmembrane regions (helical) follow at residues 1 to 21 (MDWL…FLPI), 42 to 62 (VKDT…LVYY), 81 to 101 (LWLG…LFGD), 107 to 127 (LFRP…MWLL), 142 to 162 (ISAG…LWPG), 184 to 204 (TKFS…LDFI), 213 to 233 (IGVV…YFAI), and 248 to 268 (FAVY…RGVL).

Belongs to the UppP family.

Its subcellular location is the cell membrane. It carries out the reaction di-trans,octa-cis-undecaprenyl diphosphate + H2O = di-trans,octa-cis-undecaprenyl phosphate + phosphate + H(+). In terms of biological role, catalyzes the dephosphorylation of undecaprenyl diphosphate (UPP). Confers resistance to bacitracin. The chain is Undecaprenyl-diphosphatase from Deinococcus radiodurans (strain ATCC 13939 / DSM 20539 / JCM 16871 / CCUG 27074 / LMG 4051 / NBRC 15346 / NCIMB 9279 / VKM B-1422 / R1).